A 531-amino-acid polypeptide reads, in one-letter code: Splicing factor ESS-2 (531 aa).

2 disordered regions span residues 104–163 and 453–531; these read RTPI…RKKK and PFAS…GDFF. Over residues 105–114 the composition is skewed to polar residues; sequence TPITTRSTTE. Composition is skewed to low complexity over residues 125–136 and 464–477; these read TPGPSSASTSSA and SRPSSSKRSTTPGS. The segment covering 480-498 has biased composition (polar residues); that stretch reads SRGSTTPGSSWSQGAQTPG.

The protein belongs to the ESS2 family.

It is found in the nucleus. Functionally, regulates pre-mRNA splicing. This chain is Splicing factor ESS-2 (ess-2), found in Caenorhabditis elegans.